Reading from the N-terminus, the 1868-residue chain is Inactive histone-lysine N-methyltransferase 2E (1868 aa).

Residues 63–66 carry the HCFC1-binding motif (HBM) motif; it reads DHNY. Residues 118 to 166 form a PHD-type zinc finger; it reads VTRCICGFTHDDGYMICCDKCSVWQHIDCMGIDRQHIPDTYLCERCQPR. Zn(2+) is bound by residues cysteine 121, cysteine 123, cysteine 135, cysteine 138, histidine 143, cysteine 146, cysteine 160, and cysteine 163. Disordered regions lie at residues 178–197, 217–268, and 308–329; these read RRKR…SGDE, ASRV…SSDS, and GSGN…SLFR. The SET domain occupies 330–447; sequence PPVESHIQKN…KGTEITIAFD (118 aa). A glycan (O-linked (GlcNAc) serine) is linked at serine 435. O-linked (GlcNAc) threonine glycosylation is present at threonine 440. The segment at 472-504 is disordered; the sequence is KRSSESTENINSGYETRRKKGKKEKDTSKEKDI. A compositionally biased stretch (basic and acidic residues) spans 494–504; sequence KEKDTSKEKDI. A coiled-coil region spans residues 559-613; sequence VEMESEEQIAERKRKMTREERKMEAILQAFARLEKREKRREQALERISTAKTEVK. The span at 646-670 shows a compositional bias: basic residues; sequence NRTKQRKSFSRSRTHIGQQRRRHRT. The segment at 646–682 is disordered; that stretch reads NRTKQRKSFSRSRTHIGQQRRRHRTVSMCSDIPPSSP. Serine 837 and serine 845 each carry phosphoserine. The segment covering 884 to 908 has biased composition (low complexity); the sequence is YSESSTPTPSPYATPTHTDITPTDP. Disordered regions lie at residues 884-924 and 1038-1068; these read YSES…ETYR and SMET…SSWV. A compositionally biased stretch (polar residues) spans 1049–1068; that stretch reads PSNQLDSTHSGRGTMYSSWV. The residue at position 1070 (serine 1070) is a Phosphoserine. 4 disordered regions span residues 1165–1222, 1236–1315, 1334–1565, and 1585–1842; these read KRQR…PPPA, SSEE…SNHI, PDAE…QNQQ, and VFTS…QASP. Residues 1184–1197 show a composition bias toward low complexity; sequence SVSPHPSGSLSSSG. The span at 1203 to 1213 shows a compositional bias: polar residues; sequence SSENGEQAENQ. Residue serine 1282 is modified to Phosphoserine. A compositionally biased stretch (basic and acidic residues) spans 1282-1291; sequence SDHRKDKDSG. Low complexity-rich tracts occupy residues 1294–1312 and 1348–1363; these read SPCV…SSHS and PSPD…SKPG. At serine 1364 the chain carries Phosphoserine. Composition is skewed to polar residues over residues 1389-1421, 1451-1463, and 1488-1498; these read ATVS…QNHA, HTEN…TPHT, and SQSPQVGTPQR. The segment covering 1506-1518 has biased composition (low complexity); it reads AAAQNLQANPQQA. The span at 1519–1547 shows a compositional bias: polar residues; that stretch reads TSGALFTQTPSGQSSATYSQFNQQSLNST. The span at 1548-1558 shows a compositional bias: pro residues; it reads APPPPPPPPPS. The segment covering 1585–1603 has biased composition (polar residues); the sequence is VFTSGPNQALPGSTSQQSV. The segment covering 1631–1642 has biased composition (pro residues); it reads VPPPPPPPPAPG. Residues 1647–1656 are compositionally biased toward polar residues; it reads QQPSSHQQHS. Residues 1682–1692 show a composition bias toward pro residues; sequence LPPPPPPPGPA. The span at 1706–1716 shows a compositional bias: polar residues; that stretch reads QSLQAQHQHVV. The segment covering 1719 to 1732 has biased composition (pro residues); sequence APPPPPPPPPPPPA. Polar residues predominate over residues 1806-1816; the sequence is QGPNSIPTPTA.

The protein belongs to the class V-like SAM-binding methyltransferase superfamily. Histone-lysine methyltransferase family. TRX/MLL subfamily. As to quaternary structure, component of a complex composed of KMT2E, OGT and USP7; the complex stabilizes KMT2E, preventing KMT2E ubiquitination and proteasomal-mediated degradation. Interacts (via N-terminus) with OGT (via TRP repeats). Interacts with deubiquitinating enzyme USP7 (via MATH domain). Interacts (via HBM motif) with HCFC1 (via Kelch domain). Interacts with E2F1; the interaction is probably indirect and is mediated via HCFC1. In terms of processing, ubiquitinated. Deubiquitinated by USP7. O-glycosylated at Ser-435 and Thr-440 in the SET domain by OGT which probably prevents KMT2E proteasomal-mediated degradation.

It localises to the chromosome. It is found in the cytoplasm. Its subcellular location is the cytoskeleton. The protein resides in the microtubule organizing center. The protein localises to the centrosome. It localises to the nucleus speckle. In terms of biological role, associates with chromatin regions downstream of transcriptional start sites of active genes and thus regulates gene transcription. Chromatin interaction is mediated via the binding to tri-methylated histone H3 at 'Lys-4' (H3K4me3). Key regulator of hematopoiesis involved in terminal myeloid differentiation and in the regulation of hematopoietic stem cell (HSCs) self-renewal by a mechanism that involves DNA methylation. Also acts as an important cell cycle regulator, participating in cell cycle regulatory network machinery at multiple cell cycle stages including G1/S transition, S phase progression and mitotic entry. Recruited to E2F1 responsive promoters by HCFC1 where it stimulates tri-methylation of histone H3 at 'Lys-4' and transcriptional activation and thereby facilitates G1 to S phase transition. During myoblast differentiation, required to suppress inappropriate expression of S-phase-promoting genes and maintain expression of determination genes in quiescent cells. In Mus musculus (Mouse), this protein is Inactive histone-lysine N-methyltransferase 2E (Kmt2e).